Consider the following 242-residue polypeptide: MSALAVALARQSESHADCPLFNDPYAQVFIDAALSRGCQLPSDETSERINGIANYASSRTKWFDEYFIAAGAHGLEQMVIVAAGLDARAWRLPWVAGTTLFEIDHPGVLKFKNEALHEHGESPSVSRYVPVPADLSDGWSERLRDAGFDVSEPTAWAVEGLLPYVADGPHLLFDRIHEISPAGSRLAVEAVGTGVADWLSTQGWQVTMIGAQELMTRYGRCGDHSDTDAGMDTVFVNATRTR.

S-adenosyl-L-methionine-binding positions include Asp-104 and 134 to 135 (DL).

It belongs to the UPF0677 family.

Exhibits S-adenosyl-L-methionine-dependent methyltransferase activity. In Mycobacterium sp. (strain MCS), this protein is Putative S-adenosyl-L-methionine-dependent methyltransferase Mmcs_0580.